Consider the following 66-residue polypeptide: Large ribosomal subunit protein bL33c (66 aa).

Belongs to the bacterial ribosomal protein bL33 family.

It is found in the plastid. Its subcellular location is the chloroplast. The polypeptide is Large ribosomal subunit protein bL33c (Welwitschia mirabilis (Tree tumbo)).